Here is a 33-residue protein sequence, read N- to C-terminus: Photosystem II reaction center protein T (33 aa).

A helical membrane pass occupies residues 3–23 (ALVYTFLLVSTLGIIFFAIFF).

The protein belongs to the PsbT family. In terms of assembly, PSII is composed of 1 copy each of membrane proteins PsbA, PsbB, PsbC, PsbD, PsbE, PsbF, PsbH, PsbI, PsbJ, PsbK, PsbL, PsbM, PsbT, PsbY, PsbZ, Psb30/Ycf12, at least 3 peripheral proteins of the oxygen-evolving complex and a large number of cofactors. It forms dimeric complexes.

The protein resides in the plastid. It is found in the chloroplast thylakoid membrane. Functionally, found at the monomer-monomer interface of the photosystem II (PS II) dimer, plays a role in assembly and dimerization of PSII. PSII is a light-driven water plastoquinone oxidoreductase, using light energy to abstract electrons from H(2)O, generating a proton gradient subsequently used for ATP formation. This is Photosystem II reaction center protein T from Helianthus annuus (Common sunflower).